Consider the following 305-residue polypeptide: MAATLRELRGRIRSAGSIKKITKAQELIATSRIARAQARLESARPYAFEITRMLTTLAAEAALDHPLLVERPEPKRAGVLVVSSDRGLCGAYNANIFRRSEELFSLLREAGKQPVLYVVGRKAQNYYSFRNWNITESWMGFSEQPTYENAAEIASTLVDAFLLGTDNGEDQRSDSGEGVDELHIVYTEFKSMLSQSAEAHRIAPMVVEYVEEDIGPRTLYSFEPDATMLFESLLPRYLTTRVYAALLESAASELASRQRAMKSATDNADDLIKALTLMANRERQAQITQEISEIVGGANALAEAR.

It belongs to the ATPase gamma chain family. As to quaternary structure, F-type ATPases have 2 components, CF(1) - the catalytic core - and CF(0) - the membrane proton channel. CF(1) has five subunits: alpha(3), beta(3), gamma(1), delta(1), epsilon(1). CF(0) has three main subunits: a, b and c.

The protein resides in the cell membrane. Its function is as follows. Produces ATP from ADP in the presence of a proton gradient across the membrane. The gamma chain is believed to be important in regulating ATPase activity and the flow of protons through the CF(0) complex. The polypeptide is ATP synthase gamma chain (Mycobacterium tuberculosis (strain ATCC 25177 / H37Ra)).